A 352-amino-acid polypeptide reads, in one-letter code: [Citrate [pro-3S]-lyase] ligase (352 aa).

Positions Met-1–Thr-128 constitute an N-acetyltransferase domain.

The catalysed reaction is holo-[citrate lyase ACP] + acetate + ATP = acetyl-[citrate lyase ACP] + AMP + diphosphate. In terms of biological role, acetylation of prosthetic group (2-(5''-phosphoribosyl)-3'-dephosphocoenzyme-A) of the gamma subunit of citrate lyase. The chain is [Citrate [pro-3S]-lyase] ligase (citC) from Escherichia coli (strain K12).